Here is a 456-residue protein sequence, read N- to C-terminus: MTQTETMAAAGAAKTEPKVRPAKALQGVKGMNDMLPADAPLWEHFENAARAMLRAYGYQQIRTPIVEHTQLFVRGIGEVTDIVEKEMYSFTDSLNGEQLTLRPEGTAAAVRATIEHNLLYDGPKRLWYTGPMFRHERPQRGRYRQFHQLGAEALGFAGPDVDAEIILMCQRLWDDLGLTGVRLEINSLGQADERAAHREQLIKYLEGFQDILDDDSKRRLYTNPLRVLDTKNPALQDMAANAPKLIDFLGEESLAHFEGVQRLLKANNIPFKINPRLVRGLDYYNLTVFEWITDKLGAQGTIAGGGRYDPLIAQMGGKPAPACGWAMGIERIIELIREEGVVPDAVGCDVYLVHQGEAAAQQAMVAAERLRDAGLDVVLHASPDGKGGSFKSQMKRADASGAAYAVIIGDDEVAAGVVQVKELRQREQAEGGGQQATVPADGLVDYLIDAMVGASE.

The protein belongs to the class-II aminoacyl-tRNA synthetase family. Homodimer.

Its subcellular location is the cytoplasm. It carries out the reaction tRNA(His) + L-histidine + ATP = L-histidyl-tRNA(His) + AMP + diphosphate + H(+). The sequence is that of Histidine--tRNA ligase from Cupriavidus taiwanensis (strain DSM 17343 / BCRC 17206 / CCUG 44338 / CIP 107171 / LMG 19424 / R1) (Ralstonia taiwanensis (strain LMG 19424)).